Here is a 432-residue protein sequence, read N- to C-terminus: Putative D-alanyl-D-alanine carboxypeptidase (432 aa).

A helical; Signal-anchor transmembrane segment spans residues alanine 7–leucine 25.

This sequence belongs to the peptidase S12 family. YfeW subfamily.

Its subcellular location is the cell inner membrane. It catalyses the reaction Preferential cleavage: (Ac)2-L-Lys-D-Ala-|-D-Ala. Also transpeptidation of peptidyl-alanyl moieties that are N-acyl substituents of D-alanine.. The polypeptide is Putative D-alanyl-D-alanine carboxypeptidase (Salmonella enteritidis PT4 (strain P125109)).